The following is a 222-amino-acid chain: Millepora cytotoxin-1 (222 aa).

The first 20 residues, 1–20 (MVTLYLHVPILLLVVITARA), serve as a signal peptide directing secretion. Residues 21 to 75 (APKPDTHNPFDELSSVAEKQDLHYGDRSRKDPFIAQNDVGNNFRDGTQENLTKVR) constitute a propeptide that is removed on maturation. Disulfide bonds link C89-C115, C142-C168, and C179-C222. 3 repeats span residues 100–109 (SIHDNHYEDR), 153–162 (SIHDNYYEDR), and 206–215 (SQHNNYYEDR).

This sequence belongs to the dermatopontin family. Post-translationally, is not glycosylated.

It localises to the secreted. The protein localises to the nematocyst. Its function is as follows. Is potently cytotoxic (EC(50) value 79 ng/mL) towards L1210 mouse leukemia cells, has hemagglutination activity on sheep erythrocytes, and is lethal in crayfish. Has no phospholipase A2 activity. This is Millepora cytotoxin-1 from Millepora dichotoma (Net fire coral).